The sequence spans 255 residues: Indole-3-glycerol phosphate synthase (255 aa).

This sequence belongs to the TrpC family.

It carries out the reaction 1-(2-carboxyphenylamino)-1-deoxy-D-ribulose 5-phosphate + H(+) = (1S,2R)-1-C-(indol-3-yl)glycerol 3-phosphate + CO2 + H2O. Its pathway is amino-acid biosynthesis; L-tryptophan biosynthesis; L-tryptophan from chorismate: step 4/5. This is Indole-3-glycerol phosphate synthase from Shouchella clausii (strain KSM-K16) (Alkalihalobacillus clausii).